The chain runs to 334 residues: Malate dehydrogenase (334 aa).

17-23 (GAAGQIG) is an NAD(+) binding site. Substrate is bound by residues R98 and R104. NAD(+) contacts are provided by residues N111, Q118, and 135 to 137 (VGN). Substrate contacts are provided by N137 and R168. H193 acts as the Proton acceptor in catalysis.

The protein belongs to the LDH/MDH superfamily. MDH type 2 family.

It carries out the reaction (S)-malate + NAD(+) = oxaloacetate + NADH + H(+). In terms of biological role, catalyzes the reversible oxidation of malate to oxaloacetate. This Deinococcus geothermalis (strain DSM 11300 / CIP 105573 / AG-3a) protein is Malate dehydrogenase.